Consider the following 158-residue polypeptide: Ribosome maturation factor RimP (158 aa).

The protein belongs to the RimP family.

It is found in the cytoplasm. Functionally, required for maturation of 30S ribosomal subunits. The polypeptide is Ribosome maturation factor RimP (Pseudomonas fluorescens (strain SBW25)).